Reading from the N-terminus, the 393-residue chain is 8-amino-7-oxononanoate synthase (393 aa).

Gly-108–Phe-109 is a pyridoxal 5'-phosphate binding site. His-133 lines the substrate pocket. Residues Ser-182, Asp-207–His-210, and Thr-238–Lys-241 each bind pyridoxal 5'-phosphate. The residue at position 241 (Lys-241) is an N6-(pyridoxal phosphate)lysine. Thr-355 is a binding site for substrate.

Belongs to the class-II pyridoxal-phosphate-dependent aminotransferase family. BioF subfamily. In terms of assembly, homodimer. Pyridoxal 5'-phosphate is required as a cofactor.

The catalysed reaction is 6-carboxyhexanoyl-[ACP] + L-alanine + H(+) = (8S)-8-amino-7-oxononanoate + holo-[ACP] + CO2. It functions in the pathway cofactor biosynthesis; biotin biosynthesis. Its function is as follows. Catalyzes the decarboxylative condensation of pimeloyl-[acyl-carrier protein] and L-alanine to produce 8-amino-7-oxononanoate (AON), [acyl-carrier protein], and carbon dioxide. This Petrotoga mobilis (strain DSM 10674 / SJ95) protein is 8-amino-7-oxononanoate synthase.